The sequence spans 347 residues: Purine-rich element-binding protein gamma (347 aa).

Disordered stretches follow at residues Met1–Ala34 and Gly133–Ser169. Residues Gly9–Gly24 are compositionally biased toward gly residues. The DNA-binding element occupies Ala51–Arg293. Basic and acidic residues predominate over residues His134–Ser146. A phosphoserine mark is found at Ser160, Ser163, and Ser339.

It belongs to the PUR DNA-binding protein family. Isoform 1 is expressed in testis and glioblastoma. Isoform 2 is expressed in fetal lung.

Its subcellular location is the nucleus. The protein is Purine-rich element-binding protein gamma (PURG) of Homo sapiens (Human).